Here is a 221-residue protein sequence, read N- to C-terminus: 7-cyano-7-deazaguanine synthase (221 aa).

7 to 17 lines the ATP pocket; it reads LSGGMDSTTLL. Zn(2+) contacts are provided by C183, C191, C194, and C197.

The protein belongs to the QueC family. Homodimer. Requires Zn(2+) as cofactor.

The catalysed reaction is 7-carboxy-7-deazaguanine + NH4(+) + ATP = 7-cyano-7-deazaguanine + ADP + phosphate + H2O + H(+). The protein operates within purine metabolism; 7-cyano-7-deazaguanine biosynthesis. In terms of biological role, catalyzes the ATP-dependent conversion of 7-carboxy-7-deazaguanine (CDG) to 7-cyano-7-deazaguanine (preQ(0)). This chain is 7-cyano-7-deazaguanine synthase, found in Caldicellulosiruptor bescii (strain ATCC BAA-1888 / DSM 6725 / KCTC 15123 / Z-1320) (Anaerocellum thermophilum).